Consider the following 358-residue polypeptide: Methionine import ATP-binding protein MetN (358 aa).

The ABC transporter domain occupies 2-247 (ITTTGLTKVY…PGSELAHELF (246 aa)). Position 38 to 45 (38 to 45 (GQSGAGKS)) interacts with ATP.

The protein belongs to the ABC transporter superfamily. Methionine importer (TC 3.A.1.24) family. In terms of assembly, the complex is composed of two ATP-binding proteins (MetN), two transmembrane proteins (MetI) and a solute-binding protein (MetQ).

The protein resides in the cell membrane. It catalyses the reaction L-methionine(out) + ATP + H2O = L-methionine(in) + ADP + phosphate + H(+). It carries out the reaction D-methionine(out) + ATP + H2O = D-methionine(in) + ADP + phosphate + H(+). In terms of biological role, part of the ABC transporter complex MetNIQ involved in methionine import. Responsible for energy coupling to the transport system. The polypeptide is Methionine import ATP-binding protein MetN (Streptomyces griseus).